Reading from the N-terminus, the 459-residue chain is MSLTVYNTRTRKKEPFVPVNPQSIKMYVCGPTVYNLVHIGNARPVVVFDVLFRVLKTLYPEVVYARNITDIDDKIMKAAKENGESISALTARFTEAYIEDMAALHNLPPSIAPKATAHIEPMIAMVAALVEKGHAYEADGHVLFDVQSMKNYGKLSNRALEDMLDGARVEVADYKRYAGDFVLWKPSADDEPGWASPWGRGRPGWHLECSAMIETHLGNTIDIHGGGRDLIFPHHENELAQSECAHGGEEYVRYWMHNGYVNIDGEKMSKSLGNFRTVRDLLQQYHGETIRFALLSAQYRSELDFSVSLLDQSKAGLDTLYGALKNAPATSTDAVDLSDNAGYLALLDDLNTPQVIAELHRLAKIVNKNEGQEAAIAAAQLQALGGLLGLLQQEPEAWFKATTSGSSELSAEDIEQLIVERKDAKLAKNYARADEIRKELTEKGIALEDSASGTSWKRI.

Cysteine 29 contributes to the Zn(2+) binding site. Residues 31 to 41 carry the 'HIGH' region motif; that stretch reads PTVYNLVHIGN. Zn(2+) is bound by residues cysteine 209, histidine 234, and glutamate 238. The 'KMSKS' region motif lies at 267 to 271; sequence KMSKS. Lysine 270 is a binding site for ATP.

The protein belongs to the class-I aminoacyl-tRNA synthetase family. Monomer. Zn(2+) is required as a cofactor.

It is found in the cytoplasm. It carries out the reaction tRNA(Cys) + L-cysteine + ATP = L-cysteinyl-tRNA(Cys) + AMP + diphosphate. The chain is Cysteine--tRNA ligase from Saccharophagus degradans (strain 2-40 / ATCC 43961 / DSM 17024).